A 149-amino-acid polypeptide reads, in one-letter code: UPF0756 membrane protein Nther_1957 (149 aa).

4 consecutive transmembrane segments (helical) span residues 5–25 (IVVL…LVAT), 52–72 (LGIL…DIMP), 85–105 (LIAV…VELL), and 111–131 (VMVG…GVPA).

It belongs to the UPF0756 family.

It localises to the cell membrane. The sequence is that of UPF0756 membrane protein Nther_1957 from Natranaerobius thermophilus (strain ATCC BAA-1301 / DSM 18059 / JW/NM-WN-LF).